The chain runs to 200 residues: High mobility group protein B3 (200 aa).

Lys3 is modified (N6-acetyllysine). DNA-binding regions (HMG box) lie at residues 9-79 (PKGK…KDYG) and 93-161 (PKRP…ADYK). Position 23 is a cysteine sulfonic acid (-SO3H); alternate (Cys23). Cys23 and Cys45 are oxidised to a cystine. Residues Lys30 and Lys43 each carry the N6-acetyllysine modification. Cys45 is modified (cysteine sulfonic acid (-SO3H); alternate). The disordered stretch occupies residues 71-97 (YDREMKDYGPAKGGKKKKDPNAPKRPP). Ser98 carries the phosphoserine modification. Position 104 is a cysteine sulfonic acid (-SO3H) (Cys104). Residues Lys112 and Lys139 each carry the N6-acetyllysine modification. The segment at 161-200 (KSKGKFDGAKGPAKVARKKVEEEEEEEEEEEEEEEEEEDE) is disordered. Over residues 182–200 (EEEEEEEEEEEEEEEEEDE) the composition is skewed to acidic residues.

The protein belongs to the HMGB family. In terms of processing, reduction/oxidation of cysteine residues Cys-23, Cys-45 and Cys-104 and a possible intramolecular disulfide bond involving Cys-23 and Cys-45 give rise to different redox forms with specific functional activities in various cellular compartments: 1- fully reduced HMGB3 (HMGB3C23hC45hC104h), 2- disulfide HMGB3 (HMGB3C23-C45C104h) and 3- sulfonyl HMGB3 (HMGB3C23soC45soC104so). As to expression, expressed in bone marrow cells, specifically in primitive Lin-, c-kit+, Sca-1+, IL-7Ralpha- cells, and Ter119+ erythroid cells.

The protein resides in the nucleus. It is found in the chromosome. The protein localises to the cytoplasm. Its function is as follows. Multifunctional protein with various roles in different cellular compartments. May act in a redox sensitive manner. Associates with chromatin and binds DNA with a preference for non-canonical DNA structures such as single-stranded DNA. Can bend DNA and enhance DNA flexibility by looping thus providing a mechanism to promote activities on various gene promoters. Proposed to be involved in the innate immune response to nucleic acids by acting as a cytoplasmic promiscuous immunogenic DNA/RNA sensor. Negatively regulates B-cell and myeloid cell differentiation. In hematopoietic stem cells may regulate the balance between self-renewal and differentiation. Involved in negative regulation of canonical Wnt signaling. The polypeptide is High mobility group protein B3 (Hmgb3) (Mus musculus (Mouse)).